Consider the following 246-residue polypeptide: Probable cytokinin riboside 5'-monophosphate phosphoribohydrolase LOGL5 (246 aa).

Basic and acidic residues predominate over residues 1-10 (MMMENSREQQ). The segment at 1 to 28 (MMMENSREQQPESSPANNNSKKKKKKKT) is disordered. Substrate contacts are provided by residues Glu-103, 121-122 (RK), 138-144 (GYGTLEE), and Thr-150.

This sequence belongs to the LOG family. In terms of tissue distribution, expressed in roots and leaves.

It catalyses the reaction N(6)-(dimethylallyl)adenosine 5'-phosphate + H2O = N(6)-dimethylallyladenine + D-ribose 5-phosphate. The enzyme catalyses 9-ribosyl-trans-zeatin 5'-phosphate + H2O = trans-zeatin + D-ribose 5-phosphate. In terms of biological role, cytokinin-activating enzyme working in the direct activation pathway. Phosphoribohydrolase that converts inactive cytokinin nucleotides to the biologically active free-base forms. This is Probable cytokinin riboside 5'-monophosphate phosphoribohydrolase LOGL5 (LOGL5) from Oryza sativa subsp. japonica (Rice).